The sequence spans 427 residues: 3-phosphoshikimate 1-carboxyvinyltransferase (427 aa).

K22, S23, and R27 together coordinate 3-phosphoshikimate. K22 contacts phosphoenolpyruvate. 2 residues coordinate phosphoenolpyruvate: G96 and R124. Residues S169, S170, Q171, S197, D313, N336, and K340 each contribute to the 3-phosphoshikimate site. Residue Q171 participates in phosphoenolpyruvate binding. D313 serves as the catalytic Proton acceptor. Positions 344, 386, and 411 each coordinate phosphoenolpyruvate.

Belongs to the EPSP synthase family. In terms of assembly, monomer.

The protein resides in the cytoplasm. It carries out the reaction 3-phosphoshikimate + phosphoenolpyruvate = 5-O-(1-carboxyvinyl)-3-phosphoshikimate + phosphate. Its pathway is metabolic intermediate biosynthesis; chorismate biosynthesis; chorismate from D-erythrose 4-phosphate and phosphoenolpyruvate: step 6/7. Its function is as follows. Catalyzes the transfer of the enolpyruvyl moiety of phosphoenolpyruvate (PEP) to the 5-hydroxyl of shikimate-3-phosphate (S3P) to produce enolpyruvyl shikimate-3-phosphate and inorganic phosphate. This is 3-phosphoshikimate 1-carboxyvinyltransferase from Salmonella heidelberg (strain SL476).